Here is a 325-residue protein sequence, read N- to C-terminus: Dehydrogenase/reductase SDR family member 7B (325 aa).

The Cytoplasmic segment spans residues 1-17; it reads MVSAATRKSLLRARVMD. The chain crosses the membrane as a helical; Signal-anchor for type II membrane protein span at residues 18 to 38; that stretch reads FITSTAILPLLLGCVGLFSLF. The Lumenal portion of the chain corresponds to 39–325; sequence KLLQWLRMRA…ARKERKSKHS (287 aa). Ser-62 and Leu-64 together coordinate NAD(+). Ser-194 contacts substrate. NAD(+)-binding residues include Tyr-207, Lys-211, and Thr-242. Tyr-207 functions as the Proton acceptor in the catalytic mechanism.

The protein belongs to the short-chain dehydrogenases/reductases (SDR) family.

Its subcellular location is the endoplasmic reticulum membrane. In terms of biological role, putative oxidoreductase. This is Dehydrogenase/reductase SDR family member 7B (DHRS7B) from Bos taurus (Bovine).